A 410-amino-acid chain; its full sequence is ATP phosphoribosyltransferase regulatory subunit (410 aa).

The protein belongs to the class-II aminoacyl-tRNA synthetase family. HisZ subfamily. Heteromultimer composed of HisG and HisZ subunits.

The protein localises to the cytoplasm. It participates in amino-acid biosynthesis; L-histidine biosynthesis; L-histidine from 5-phospho-alpha-D-ribose 1-diphosphate: step 1/9. Its function is as follows. Required for the first step of histidine biosynthesis. May allow the feedback regulation of ATP phosphoribosyltransferase activity by histidine. The sequence is that of ATP phosphoribosyltransferase regulatory subunit from Synechococcus sp. (strain JA-3-3Ab) (Cyanobacteria bacterium Yellowstone A-Prime).